The chain runs to 159 residues: U1 small nuclear ribonucleoprotein C (159 aa).

Residues 4–36 form a Matrin-type zinc finger; sequence FYCDYCDTYLTHDSPSVRKTHCSGRKHKENVKD. 2 disordered regions span residues 63–95 and 139–159; these read PPTPFAAPPAGSAMIPPPPSMGGPPRPGMMPAP and MRPPTRPMMLQSRPGMARPDR. Pro residues predominate over residues 77 to 95; that stretch reads IPPPPSMGGPPRPGMMPAP.

It belongs to the U1 small nuclear ribonucleoprotein C family. Component of the U1 snRNP. The U1 snRNP is composed of the U1 snRNA and the 7 core Sm proteins snrpb, snrpd1, snrpd2, snrpd3, snrpe, snrpf and snrpg that assemble in a heptameric protein ring on the Sm site of the small nuclear RNA to form the core snRNP, and at least 3 U1 snRNP-specific proteins snrnp70/U1-70K, snrpa/U1-A and snrpc/U1-C. snrpc/U1-C interacts with U1 snRNA and the 5' splice-site region of the pre-mRNA.

The protein resides in the nucleus. Its function is as follows. Component of the spliceosomal U1 snRNP, which is essential for recognition of the pre-mRNA 5' splice-site and the subsequent assembly of the spliceosome. snrpc/U1-C is directly involved in initial 5' splice-site recognition for both constitutive and regulated alternative splicing. The interaction with the 5' splice-site seems to precede base-pairing between the pre-mRNA and the U1 snRNA. Stimulates commitment or early (E) complex formation by stabilizing the base pairing of the 5' end of the U1 snRNA and the 5' splice-site region. The chain is U1 small nuclear ribonucleoprotein C from Xenopus tropicalis (Western clawed frog).